The sequence spans 564 residues: 2-succinyl-5-enolpyruvyl-6-hydroxy-3-cyclohexene-1-carboxylate synthase (564 aa).

This sequence belongs to the TPP enzyme family. MenD subfamily. As to quaternary structure, homodimer. It depends on Mg(2+) as a cofactor. Mn(2+) serves as cofactor. Requires thiamine diphosphate as cofactor.

The catalysed reaction is isochorismate + 2-oxoglutarate + H(+) = 5-enolpyruvoyl-6-hydroxy-2-succinyl-cyclohex-3-ene-1-carboxylate + CO2. It functions in the pathway quinol/quinone metabolism; 1,4-dihydroxy-2-naphthoate biosynthesis; 1,4-dihydroxy-2-naphthoate from chorismate: step 2/7. The protein operates within quinol/quinone metabolism; menaquinone biosynthesis. In terms of biological role, catalyzes the thiamine diphosphate-dependent decarboxylation of 2-oxoglutarate and the subsequent addition of the resulting succinic semialdehyde-thiamine pyrophosphate anion to isochorismate to yield 2-succinyl-5-enolpyruvyl-6-hydroxy-3-cyclohexene-1-carboxylate (SEPHCHC). The sequence is that of 2-succinyl-5-enolpyruvyl-6-hydroxy-3-cyclohexene-1-carboxylate synthase from Vibrio vulnificus (strain CMCP6).